A 386-amino-acid polypeptide reads, in one-letter code: Protein-glutamate methylesterase/protein-glutamine glutaminase (386 aa).

The region spanning 4–121 is the Response regulatory domain; that stretch reads KVLVVDDSAF…ARNRDEAVKT (118 aa). 4-aspartylphosphate is present on Asp-55. The segment at 133–161 is disordered; it reads PVSRTSARASTPPPVAKQPERSSEPTTAL. Positions 190 to 384 constitute a CheB-type methylesterase domain; sequence INRAYQLLAI…KAIMKEVGYS (195 aa). Catalysis depends on residues Ser-202, His-229, and Asp-326.

It belongs to the CheB family. Phosphorylated by CheA. Phosphorylation of the N-terminal regulatory domain activates the methylesterase activity.

It is found in the cytoplasm. It carries out the reaction [protein]-L-glutamate 5-O-methyl ester + H2O = L-glutamyl-[protein] + methanol + H(+). It catalyses the reaction L-glutaminyl-[protein] + H2O = L-glutamyl-[protein] + NH4(+). Functionally, involved in chemotaxis. Part of a chemotaxis signal transduction system that modulates chemotaxis in response to various stimuli. Catalyzes the demethylation of specific methylglutamate residues introduced into the chemoreceptors (methyl-accepting chemotaxis proteins or MCP) by CheR. Also mediates the irreversible deamidation of specific glutamine residues to glutamic acid. This chain is Protein-glutamate methylesterase/protein-glutamine glutaminase, found in Idiomarina loihiensis (strain ATCC BAA-735 / DSM 15497 / L2-TR).